We begin with the raw amino-acid sequence, 304 residues long: Bifunctional protein FolD (304 aa).

NADP(+)-binding positions include 176-178 (GAS), isoleucine 201, and isoleucine 242.

Belongs to the tetrahydrofolate dehydrogenase/cyclohydrolase family. As to quaternary structure, homodimer.

The catalysed reaction is (6R)-5,10-methylene-5,6,7,8-tetrahydrofolate + NADP(+) = (6R)-5,10-methenyltetrahydrofolate + NADPH. It catalyses the reaction (6R)-5,10-methenyltetrahydrofolate + H2O = (6R)-10-formyltetrahydrofolate + H(+). It participates in one-carbon metabolism; tetrahydrofolate interconversion. In terms of biological role, catalyzes the oxidation of 5,10-methylenetetrahydrofolate to 5,10-methenyltetrahydrofolate and then the hydrolysis of 5,10-methenyltetrahydrofolate to 10-formyltetrahydrofolate. This Gluconobacter oxydans (strain 621H) (Gluconobacter suboxydans) protein is Bifunctional protein FolD.